The primary structure comprises 153 residues: Ribosome maturation factor RimP (153 aa).

This sequence belongs to the RimP family.

Its subcellular location is the cytoplasm. Functionally, required for maturation of 30S ribosomal subunits. This Marinomonas sp. (strain MWYL1) protein is Ribosome maturation factor RimP.